We begin with the raw amino-acid sequence, 567 residues long: Urease subunit alpha (567 aa).

Residues 129 to 567 (GGIDTHIHFI…LPMAQRYFLF (439 aa)) enclose the Urease domain. 3 residues coordinate Ni(2+): histidine 134, histidine 136, and lysine 217. Lysine 217 bears the N6-carboxylysine mark. Position 219 (histidine 219) interacts with substrate. The Ni(2+) site is built by histidine 246 and histidine 272. The active-site Proton donor is the histidine 320. Position 360 (aspartate 360) interacts with Ni(2+).

Belongs to the metallo-dependent hydrolases superfamily. Urease alpha subunit family. Heterotrimer of UreA (gamma), UreB (beta) and UreC (alpha) subunits. Three heterotrimers associate to form the active enzyme. Requires Ni cation as cofactor. In terms of processing, carboxylation allows a single lysine to coordinate two nickel ions.

It localises to the cytoplasm. The enzyme catalyses urea + 2 H2O + H(+) = hydrogencarbonate + 2 NH4(+). The protein operates within nitrogen metabolism; urea degradation; CO(2) and NH(3) from urea (urease route): step 1/1. This chain is Urease subunit alpha, found in Delftia acidovorans (strain DSM 14801 / SPH-1).